The sequence spans 295 residues: Small ribosomal subunit protein mS23 (295 aa).

The disordered stretch occupies residues 249 to 295 (IGSVVEEEKSQSSLFEDLLSNDNLQSEPEVEQSGQQQQQEQPKQETN). Positions 273 to 289 (QSEPEVEQSGQQQQQEQ) are enriched in low complexity.

It belongs to the mitochondrion-specific ribosomal protein mS23 family. Component of the mitochondrial small ribosomal subunit (mt-SSU).

The protein localises to the mitochondrion. In terms of biological role, component of the mitochondrial ribosome (mitoribosome), a dedicated translation machinery responsible for the synthesis of mitochondrial genome-encoded proteins, including at least some of the essential transmembrane subunits of the mitochondrial respiratory chain. The mitoribosomes are attached to the mitochondrial inner membrane and translation products are cotranslationally integrated into the membrane. The chain is Small ribosomal subunit protein mS23 (RSM25) from Candida albicans (strain SC5314 / ATCC MYA-2876) (Yeast).